A 598-amino-acid chain; its full sequence is Chromodomain Y-like protein (598 aa).

Residues 1–76 (MTFQASHRSA…VDKRKNKKGK (76 aa)) form a disordered region. The span at 44–56 (PSISVSSEQSGAQ) shows a compositional bias: polar residues. Residues 61-121 (LQVERIVDKR…RHTEKQKEST (61 aa)) enclose the Chromo domain. The segment at 61–309 (LQVERIVDKR…NIQTSVTGVT (249 aa)) is interaction with EZH2. Residues 65–76 (RIVDKRKNKKGK) are compositionally biased toward basic and acidic residues. A Phosphoserine modification is found at serine 88. Over residues 112 to 121 (RHTEKQKEST) the composition is skewed to basic and acidic residues. The segment at 112–149 (RHTEKQKESTLTRTNRTSPNNARKQISRSTNSNFSKTS) is disordered. Residues 122–149 (LTRTNRTSPNNARKQISRSTNSNFSKTS) are compositionally biased toward polar residues. Lysine 135 bears the N6,N6,N6-trimethyllysine; by EHMT2; alternate mark. Position 135 is an N6,N6-dimethyllysine; by EHMT2; alternate (lysine 135). At lysine 135 the chain carries N6-methyllysine; by EHMT2; alternate. Residues serine 170, serine 201, and serine 216 each carry the phosphoserine modification. A disordered region spans residues 204 to 226 (KSRTAVDGFQSESPEKLDPVEQG). The tract at residues 362-594 (SENNSLNPEV…DSMLKYLQRK (233 aa)) is acetyl-CoA-binding domain.

Forms multimers and multimerization is required for stable binding to chromatin. Interacts with HDAC1 and HDAC2 via its C-terminal acetyl-CoA-binding domain. Interacts with EZH2, EED, SUZ12, REST, EHMT1 and EHMT2. Part of a complex containing at least CDYL, REST, WIZ, SETB1, EHMT1 and EHMT2. Part of a complex containing at least CDYL, MIER1, MIER2, HDAC1 and HDAC2. Interacts with CHAF1A and CHAF1B; bridging the CAF-1 complex to the MCM2-7 (MCM) complex. Interacts with MCM3 and MCM5; bridging the CAF-1 complex to the MCM2-7 (MCM) complex. Recruited to Xist RNA-coated X chromosome. Interacts with EHMT2 and PRDM9; interaction only takes place when PRDM9 is bound to hotspot DNA. As to expression, expressed in the hippocampus with reduced expression in epileptic tissue compared to normal adjacent tissue (at protein level). Ubiquitous. Expressed at moderate levels in all tissues examined. Isoform 2: Most abundantly expressed isoform.

It is found in the nucleus. The protein resides in the chromosome. It carries out the reaction 3-hydroxybutanoyl-CoA = (2E)-butenoyl-CoA + H2O. Functionally, chromatin reader protein that recognizes and binds histone H3 trimethylated at 'Lys-9', dimethylated at 'Lys-27' and trimethylated at 'Lys-27' (H3K9me3, H3K27me2 and H3K27me3, respectively). Part of multimeric repressive chromatin complexes, where it is required for transmission and restoration of repressive histone marks, thereby preserving the epigenetic landscape. Required for chromatin targeting and maximal enzymatic activity of Polycomb repressive complex 2 (PRC2); acts as a positive regulator of PRC2 activity by bridging the pre-existing histone H3K27me3 and newly recruited PRC2 on neighboring nucleosomes. Acts as a corepressor for REST by facilitating histone-lysine N-methyltransferase EHMT2 recruitment and H3K9 dimethylation at REST target genes for repression. Involved in X chromosome inactivation in females: recruited to Xist RNA-coated X chromosome and facilitates propagation of H3K9me2 by anchoring EHMT2. Promotes EZH2 accumulation and H3K27me3 methylation at DNA double strand breaks (DSBs), thereby facilitating transcriptional repression at sites of DNA damage and homology-directed repair of DSBs. Required for neuronal migration during brain development by repressing expression of RHOA. By repressing the expression of SCN8A, contributes to the inhibition of intrinsic neuronal excitability and epileptogenesis. In addition to acting as a chromatin reader, acts as a hydro-lyase. Shows crotonyl-coA hydratase activity by mediating the conversion of crotonyl-CoA ((2E)-butenoyl-CoA) to beta-hydroxybutyryl-CoA (3-hydroxybutanoyl-CoA), thereby acting as a negative regulator of histone crotonylation. Histone crotonylation is required during spermatogenesis; down-regulation of histone crotonylation by CDYL regulates the reactivation of sex chromosome-linked genes in round spermatids and histone replacement in elongating spermatids. By regulating histone crotonylation and trimethylation of H3K27, may be involved in stress-induced depression-like behaviors, possibly by regulating VGF expression. In terms of biological role, not able to recognize and bind histone H3K9me3, histone H3K27me2 and histone H3K27me3, due to the presence of a N-terminal extension that inactivates the chromo domain. Its function is as follows. Not able to recognize and bind histone H3K9me3, histone H3K27me2 and histone H3K27me3, due to the absence of the chromo domain. Acts as a negative regulator of isoform 2 by displacing isoform 2 from chromatin. This is Chromodomain Y-like protein from Homo sapiens (Human).